The sequence spans 537 residues: Aminopeptidase Y (537 aa).

The signal sequence occupies residues 1–21 (MHFSLKQLAVAAFYATNLGSA). A propeptide spanning residues 22 to 56 (YVIPQFFQEAFQQEEPIENYLPQLNDDDSSAVAAN) is cleaved from the precursor. Asn-85, Asn-96, Asn-115, Asn-150, and Asn-162 each carry an N-linked (GlcNAc...) asparagine glycan. Residues His-314 and Asp-326 each coordinate Zn(2+). Glu-358 acts as the Proton acceptor in catalysis. Glu-359 is a binding site for Zn(2+). Asn-371 carries an N-linked (GlcNAc...) asparagine glycan. Asp-387 contacts Zn(2+). Residue Asn-427 is glycosylated (N-linked (GlcNAc...) asparagine). His-472 is a binding site for Zn(2+). The N-linked (GlcNAc...) asparagine glycan is linked to Asn-480.

It belongs to the peptidase M28 family. M28A subfamily. In terms of assembly, monomer. Zn(2+) is required as a cofactor.

Its subcellular location is the vacuole. It carries out the reaction Preferentially, release of N-terminal lysine.. This Saccharomyces cerevisiae (strain ATCC 204508 / S288c) (Baker's yeast) protein is Aminopeptidase Y (APE3).